We begin with the raw amino-acid sequence, 243 residues long: Mannosyl-3-phosphoglycerate phosphatase (243 aa).

Asp-8 (nucleophile) is an active-site residue. Asp-8, Asp-10, Ser-169, and Asp-204 together coordinate Mg(2+).

It belongs to the HAD-like hydrolase superfamily. MPGP family. Requires Mg(2+) as cofactor.

The protein resides in the cytoplasm. It catalyses the reaction 2-O-(alpha-D-mannosyl)-3-phosphoglycerate + H2O = (2R)-2-O-(alpha-D-mannosyl)-glycerate + phosphate. It participates in carbohydrate biosynthesis; 2-(alpha-D-mannosyl)-D-glycerate biosynthesis; 2-(alpha-D-mannosyl)-D-glycerate from GDP-alpha-D-mannose (MPG route): step 2/2. In terms of biological role, hydrolyzes mannosyl-3-phosphoglycerate (MPG) to form the osmolyte mannosylglycerate (MG). The enzyme is absolutely specific for MPG. The polypeptide is Mannosyl-3-phosphoglycerate phosphatase (Pyrococcus horikoshii (strain ATCC 700860 / DSM 12428 / JCM 9974 / NBRC 100139 / OT-3)).